Here is a 1383-residue protein sequence, read N- to C-terminus: MQCYTEILPPTGVTHALAVPFLAATSDDLIVVRTSLLQIYSLHKVASHAEGADAQQESTKLLLEKEYSLSGTVTGLCRVKVLNSKSGGEAVLVAFRNAKLSLIEWDPERRGISTISIHYYERDDLTRSPWVPDLNNCGSILSVDPSSRCAIFNFGIRNLAIIPFHQPGDDLVMDDYGSDLGEGISTDHDLGGGTVADKAKEGIVYQTPYAPSFVLPLTTLDPSILHPISLAFLYEYREPTFGILYSQVATSSALLPERKDVVFYTVFTLDLEQQASTVLLSVSRLPSDLFRVVALPPPVGGALLIGSNELVHIDQAGKTNAVGVNEFSRQVSSFSMTDQSDLALRLENCIVECLGDSSGDMLLVLTTGEMAIVKFKLDGRSVSGISVHLLPAHAGLTSIYSAAAASTFIGDGKIFLGSEDGDSVLLGYSYSSSSTKKHRLQAKQVIDDSADMSEEDQSDDDVYEDDLYSTSPDTTLTGRRPSGESSAFGLYDFRIHDKLINIGPLRDITMGKRLSTNLEKTGDRTNSTSPELQIVASQGSHKSGGLVVMAREIDPHVVASISLESVDCIWTASLTREEEAVSGTSEKMGQQSQRCYVIATEVKGSDREESLIFVVDGHDLKPFRAPDFNPNEDVTISVGTQESRKRVVQVLKNEVRSYDFDLSLTQIYPIWDDDTNDERMAVSASLADSCLAILRDDSTLLFLQADDSGDLDEVVFGEDVASGKWISCCLYSDKTGMFSSIDRTLSEPVKNDMFLFLLSHDCKLFVYRVRDQKLLSIIEGTDGLSPLLSSEPPKRSGTRENLIEAIVADLGETWSASPYLILRSETDDLIIYKPFVVSTGPVEGIHSLKFSKETNSVLPRIPPGVSSTQPSGSDYRARPLRILPDISGLSAVFMPGASAGFIIRTSASAPHFLRLRGENSRSSTVRFCKLPPMTRFDYQWTLKRVHLGEQVDHLAYSTSSGMYVLGTCHATDFKLPEDDELHPEWRNEAISFFPSARGSFIKLVWDHHLQRQDSVILIFHLHSFSLGADEYVMAIKNISLEVSENTHERKDMIVVGTAFARGEDIPSRGCIYVFEVVQVVPDPDHPETDRKLKLIGKEPVKGAVTALSEIGGQGFVLVAQGQKCMVRGLKEDGSLLPVAFMDMQCYVSVVKELKGTGMCILGDAVKGVWFAGYSEEPYKMSLFAKDLDYLEVCAAEFLPDGKRLFIVVADSDCNIHVLQYDPEDPKSSNGDRLLSRSKFHMGNFASTLTLLPRTMVSSEKMVSSSDGMDIDNQSPLHQVLMTTQNGSLGLITCIPEESYRRLSALQSQLTNTLEHPCGLNPRAFRAVESDGTAGRGMLDGNLLFKWIDMSKQRKTEIAGRVGAREWEIKADLEAISGDGLGYL.

The disordered stretch occupies residues 441–482; sequence QAKQVIDDSADMSEEDQSDDDVYEDDLYSTSPDTTLTGRRPS. Residues 448-467 are compositionally biased toward acidic residues; it reads DSADMSEEDQSDDDVYEDDL.

Belongs to the CFT1 family.

Its subcellular location is the nucleus. Functionally, RNA-binding component of the cleavage and polyadenylation factor (CPF) complex, which plays a key role in polyadenylation-dependent pre-mRNA 3'-end formation and cooperates with cleavage factors including the CFIA complex and NAB4/CFIB. Involved in poly(A) site recognition. May be involved in coupling transcription termination and mRNA 3'-end formation. The sequence is that of Protein cft1 (cft1) from Aspergillus niger (strain ATCC MYA-4892 / CBS 513.88 / FGSC A1513).